Consider the following 431-residue polypeptide: ABSCISIC ACID-INSENSITIVE 5-like protein 7 (431 aa).

Positions 1–29 are disordered; sequence MGTHINFNNLGGGGHPGGEGSSNQMKPTG. Residues 10-20 are compositionally biased toward gly residues; that stretch reads LGGGGHPGGEG. Phosphoserine is present on residues serine 39 and serine 61. Serine 110 bears the Phosphoserine; by CPK32 mark. The segment at 133–153 is disordered; sequence DGNMEGSSGGGGESNVPPGRQ. Threonine 155 carries the phosphothreonine modification. Positions 319–331 are enriched in polar residues; that stretch reads SPGTSSAENNSLS. Residues 319-338 form a disordered region; sequence SPGTSSAENNSLSPVPYVLN. The Nuclear localization signal motif lies at 340–347; that stretch reads GRRSNTGL. In terms of domain architecture, bZIP spans 351–414; it reads IERRQRRMIK…KNELKETSKR (64 aa). Residues 353–372 are basic motif; that stretch reads RRQRRMIKNRESAARSRARK. Positions 372–411 form a coiled coil; it reads KQAYTLELEAEIEKLKKTNQELQKKQAEMVEMQKNELKET. The leucine-zipper stretch occupies residues 379–393; that stretch reads LEAEIEKLKKTNQEL.

This sequence belongs to the bZIP family. ABI5 subfamily. In terms of assembly, DNA-binding heterodimer. Interacts with CPK32 and the AFP proteins AFP1, AFP2 and AFP3. Interacts with FREE1 (via C-terminus). Phosphorylated by CPK4 and CPK11 in vitro. In terms of tissue distribution, expressed in roots, leaves, flowers and immatures siliques.

Its subcellular location is the nucleus. Functionally, functions as a transcriptional activator in the ABA-inducible expression of LTI65/RD29B (AC Q04980). Binds specifically to the ABA-responsive element (ABRE) of the LTI65/RD29B (AC Q04980) gene promoter. Binds to the promoter of FREE1 and activates its transcription. The sequence is that of ABSCISIC ACID-INSENSITIVE 5-like protein 7 from Arabidopsis thaliana (Mouse-ear cress).